The following is a 204-amino-acid chain: Thioredoxin-like 4, chloroplastic (204 aa).

A chloroplast-targeting transit peptide spans 1–27 (MSSLLNISHCSYHGYSGLTSRGGINTV). A Thioredoxin domain is found at 63-201 (AKSLSQENLV…IDAAILKYTS (139 aa)). Residues Cys119 and Cys122 each act as nucleophile in the active site. An intrachain disulfide couples Cys119 to Cys122.

Belongs to the thioredoxin family.

The protein resides in the plastid. The protein localises to the chloroplast. Probable thiol-disulfide oxidoreductase that may participate in various redox reactions. The polypeptide is Thioredoxin-like 4, chloroplastic (Arabidopsis thaliana (Mouse-ear cress)).